The sequence spans 743 residues: Coiled-coil domain-containing protein 30 (743 aa).

2 stretches are compositionally biased toward basic and acidic residues: residues 1–22 and 133–193; these read MSQEKNEMFESEWSKEREREKQ and SPKE…MKPE. Disordered regions lie at residues 1–25, 114–193, 208–233, and 695–715; these read MSQEKNEMFESEWSKEREREKQLAS, ENIC…MKPE, SLLQSQSSGDSSDDSGAQYPSSGDKL, and SKEAMASSKSPEKSPENLVCS. 2 coiled-coil regions span residues 21 to 98 and 165 to 580; these read KQLA…QLNH and REGQ…LIHS. A compositionally biased stretch (low complexity) spans 208-223; that stretch reads SLLQSQSSGDSSDDSG.

The protein belongs to the prefoldin subunit beta family.

This is Coiled-coil domain-containing protein 30 (CCDC30) from Macaca fascicularis (Crab-eating macaque).